The primary structure comprises 480 residues: EGF-like repeat and discoidin I-like domain-containing protein 3 (480 aa).

Positions 1–23 are cleaved as a signal peptide; the sequence is MKHLVAAWLLVGLSLGVPQFGKG. In terms of domain architecture, EGF-like 1 spans 24–60; that stretch reads DICNPNPCENGGICLSGLADDSFSCECPEGFAGPNCS. Intrachain disulfides connect cysteine 26-cysteine 37, cysteine 31-cysteine 48, and cysteine 50-cysteine 59. O-linked (GalNAc...) threonine glycosylation is present at threonine 73. 2 consecutive EGF-like domains span residues 74 to 117 and 119 to 155; these read SAGP…IHCQ and NINECEAEPCRNGGICTDLVANYSCECPGEFMGRNCQ. Disulfide bonds link cysteine 78–cysteine 89, cysteine 83–cysteine 105, and cysteine 107–cysteine 116. Threonine 88 carries an O-linked (Fuc...) threonine glycan. The short motif at 96–98 is the Cell attachment site element; that stretch reads RGD. Positions 119, 120, and 122 each coordinate Ca(2+). 6 disulfide bridges follow: cysteine 123/cysteine 134, cysteine 128/cysteine 143, cysteine 145/cysteine 154, cysteine 158/cysteine 314, cysteine 301/cysteine 305, and cysteine 319/cysteine 476. Residues aspartate 136 and leucine 137 each contribute to the Ca(2+) site. N-linked (GlcNAc...) asparagine glycosylation occurs at asparagine 140. F5/8 type C domains lie at 158–314 and 319–476; these read CSGP…LLGC and CSEP…LLGC.

In terms of tissue distribution, expressed in angioblasts and early endothelial cells. By embryonic day 13.5, also expressed in a restricted group of non-endothelial cells including chondrocytes and retinal neurons.

It localises to the secreted. Functionally, promotes adhesion of endothelial cells through interaction with the alpha-v/beta-3 integrin receptor. Inhibits formation of vascular-like structures. May be involved in regulation of vascular morphogenesis of remodeling in embryonic development. In Mus musculus (Mouse), this protein is EGF-like repeat and discoidin I-like domain-containing protein 3 (Edil3).